Reading from the N-terminus, the 405-residue chain is Subtilisin-like protease 6 (405 aa).

Residues 1–18 (FITKAIPIVLAALSAVNG) form the signal peptide. A propeptide spanning residues 19 to 125 (AKILEAGPHA…VRTSTNGTNL (107 aa)) is cleaved from the precursor. An Inhibitor I9 domain is found at 34-118 (KYIVVMKKDV…YIEPDFVVRT (85 aa)). 2 N-linked (GlcNAc...) asparagine glycosylation sites follow: asparagine 121 and asparagine 124. A Peptidase S8 domain is found at 133–405 (SWGLARVGSK…GEGTTGKLIY (273 aa)). Residues aspartate 165 and histidine 196 each act as charge relay system in the active site. Asparagine 250 and asparagine 262 each carry an N-linked (GlcNAc...) asparagine glycan. Serine 356 (charge relay system) is an active-site residue.

It belongs to the peptidase S8 family.

Its subcellular location is the secreted. In terms of biological role, secreted subtilisin-like serine protease with keratinolytic activity that contributes to pathogenicity. In Trichophyton schoenleinii, this protein is Subtilisin-like protease 6 (SUB6).